Consider the following 554-residue polypeptide: Rab GTPase-binding effector protein 2 (554 aa).

Disordered regions lie at residues 1 to 28 (MAAA…SELS), 167 to 208 (IQRR…GPAA), and 371 to 395 (GLRA…DEAL). The segment covering 14 to 28 (PQEKQKDASESSELS) has biased composition (basic and acidic residues). The stretch at 15 to 173 (QEKQKDASES…IQEIQRRPRQ (159 aa)) forms a coiled coil. S176, S180, S187, and S191 each carry phosphoserine. A coiled-coil region spans residues 274–509 (DSQWEQLQVE…QAELETSEQV (236 aa)).

The protein belongs to the rabaptin family. As to quaternary structure, heterodimer with RABGEF1. The dimer binds RAB5A that has been activated by GTP-binding. Interacts with SDCCAG8; this interaction is important for ciliogenesis regulation. Interacts with RAB4A; this interaction may mediate VEGFR2 cell surface expression.

The protein resides in the cytoplasm. It localises to the early endosome. The protein localises to the cytoskeleton. Its subcellular location is the microtubule organizing center. It is found in the centrosome. The protein resides in the cilium basal body. In terms of biological role, plays a role in membrane trafficking and in homotypic early endosome fusion. Participates in arteriogenesis by regulating vascular endothelial growth factor receptor 2/VEGFR2 cell surface expression and endosomal trafficking. By interacting with SDCCAG8, localizes to centrosomes and plays a critical role in ciliogenesis. This chain is Rab GTPase-binding effector protein 2 (Rabep2), found in Mus musculus (Mouse).